The primary structure comprises 300 residues: tRNA pseudouridine synthase B (300 aa).

Asp-47 serves as the catalytic Nucleophile.

It belongs to the pseudouridine synthase TruB family. Type 1 subfamily.

The catalysed reaction is uridine(55) in tRNA = pseudouridine(55) in tRNA. Its function is as follows. Responsible for synthesis of pseudouridine from uracil-55 in the psi GC loop of transfer RNAs. This chain is tRNA pseudouridine synthase B, found in Azoarcus sp. (strain BH72).